Here is a 345-residue protein sequence, read N- to C-terminus: MIKLKNISKIFDVAGKKLNALDNVSLDIPKGDICGVIGASGAGKSTLIRCVNLLERPTSGSVFVDGQDLTQLSEAQLIAERRNIGMIFQHFNLLSSRTVYENVALPLTLEHMAKEKIHEKVTALLALVGLTDKKDVYPANLSGGQKQRVAIARALASDPKVLLCDEATSALDPATTQSILKLLKEINRTLGITILLITHEMDVVKNICDQVAVIDKGQLIEQGSVSEIFSNPKTELAQEFIRSTFQANLPEEYLAKLTDTPKRSDSYPIIRFEFTGRSVDAPLLSQTSRKFNVSFNILVSQIDYAGGTKFGFTIAEVEGDEDSITQAKIYLMESNVRVEVLGYVD.

An ABC transporter domain is found at 2-241 (IKLKNISKIF…PKTELAQEFI (240 aa)). ATP is bound at residue 38–45 (GASGAGKS).

This sequence belongs to the ABC transporter superfamily. Methionine importer (TC 3.A.1.24) family. As to quaternary structure, the complex is composed of two ATP-binding proteins (MetN), two transmembrane proteins (MetI) and a solute-binding protein (MetQ).

It localises to the cell inner membrane. The enzyme catalyses L-methionine(out) + ATP + H2O = L-methionine(in) + ADP + phosphate + H(+). The catalysed reaction is D-methionine(out) + ATP + H2O = D-methionine(in) + ADP + phosphate + H(+). Functionally, part of the ABC transporter complex MetNIQ involved in methionine import. Responsible for energy coupling to the transport system. The protein is Methionine import ATP-binding protein MetN of Mannheimia succiniciproducens (strain KCTC 0769BP / MBEL55E).